Consider the following 150-residue polypeptide: Endoribonuclease YbeY (150 aa).

Positions 112, 116, and 122 each coordinate Zn(2+).

This sequence belongs to the endoribonuclease YbeY family. It depends on Zn(2+) as a cofactor.

It localises to the cytoplasm. Single strand-specific metallo-endoribonuclease involved in late-stage 70S ribosome quality control and in maturation of the 3' terminus of the 16S rRNA. This Bdellovibrio bacteriovorus (strain ATCC 15356 / DSM 50701 / NCIMB 9529 / HD100) protein is Endoribonuclease YbeY.